The sequence spans 550 residues: Arginine--tRNA ligase (550 aa).

A 'HIGH' region motif is present at residues 130–140 (ANPTGPIHIGG).

Belongs to the class-I aminoacyl-tRNA synthetase family. As to quaternary structure, monomer.

It localises to the cytoplasm. The enzyme catalyses tRNA(Arg) + L-arginine + ATP = L-arginyl-tRNA(Arg) + AMP + diphosphate. The protein is Arginine--tRNA ligase of Mycobacterium ulcerans (strain Agy99).